We begin with the raw amino-acid sequence, 182 residues long: Probable pyruvoyl-dependent arginine decarboxylase (182 aa).

Position 43 is a pyruvic acid (Ser) (Ser-43).

Belongs to the PdaD family. It depends on pyruvate as a cofactor.

The enzyme catalyses L-arginine + H(+) = agmatine + CO2. The chain is Probable pyruvoyl-dependent arginine decarboxylase from Chloroherpeton thalassium (strain ATCC 35110 / GB-78).